A 429-amino-acid chain; its full sequence is UDP-N-acetylglucosamine 1-carboxyvinyltransferase (429 aa).

A phosphoenolpyruvate-binding site is contributed by 22–23; sequence KN. Position 102 (arginine 102) interacts with UDP-N-acetyl-alpha-D-glucosamine. Residue cysteine 126 is the Proton donor of the active site. The residue at position 126 (cysteine 126) is a 2-(S-cysteinyl)pyruvic acid O-phosphothioketal. UDP-N-acetyl-alpha-D-glucosamine contacts are provided by residues 131–135, aspartate 316, and isoleucine 338; that span reads RPVDL.

This sequence belongs to the EPSP synthase family. MurA subfamily.

It is found in the cytoplasm. It catalyses the reaction phosphoenolpyruvate + UDP-N-acetyl-alpha-D-glucosamine = UDP-N-acetyl-3-O-(1-carboxyvinyl)-alpha-D-glucosamine + phosphate. It participates in cell wall biogenesis; peptidoglycan biosynthesis. Its function is as follows. Cell wall formation. Adds enolpyruvyl to UDP-N-acetylglucosamine. In Rhodopseudomonas palustris (strain BisB18), this protein is UDP-N-acetylglucosamine 1-carboxyvinyltransferase.